A 360-amino-acid chain; its full sequence is Squamosa promoter-binding-like protein 7 (360 aa).

Residues Ala74–Ala89 show a composition bias toward gly residues. Residues Ala74 to Ala98 form a disordered region. Residues Val105 to Ser182 form an SBP-type zinc finger. Zn(2+) is bound by residues Cys108, Cys113, Cys130, His133, Cys149, Cys152, His156, and Cys168. Positions Lys165–Arg181 match the Bipartite nuclear localization signal motif. Over residues Leu172 to Ser182 the composition is skewed to basic residues. Disordered regions lie at residues Leu172–His196, Phe261–Gln306, and Thr318–Val360.

As to expression, expressed in young panicles.

The protein localises to the nucleus. Functionally, trans-acting factor that binds specifically to the consensus nucleotide sequence 5'-TNCGTACAA-3'. May be involved in panicle development. This Oryza sativa subsp. japonica (Rice) protein is Squamosa promoter-binding-like protein 7 (SPL7).